Here is a 203-residue protein sequence, read N- to C-terminus: UPF0637 protein SH1846 (203 aa).

The protein belongs to the UPF0637 family.

The polypeptide is UPF0637 protein SH1846 (Staphylococcus haemolyticus (strain JCSC1435)).